Reading from the N-terminus, the 363-residue chain is S-adenosylmethionine:tRNA ribosyltransferase-isomerase (363 aa).

This sequence belongs to the QueA family. In terms of assembly, monomer.

The protein localises to the cytoplasm. The enzyme catalyses 7-aminomethyl-7-carbaguanosine(34) in tRNA + S-adenosyl-L-methionine = epoxyqueuosine(34) in tRNA + adenine + L-methionine + 2 H(+). The protein operates within tRNA modification; tRNA-queuosine biosynthesis. Functionally, transfers and isomerizes the ribose moiety from AdoMet to the 7-aminomethyl group of 7-deazaguanine (preQ1-tRNA) to give epoxyqueuosine (oQ-tRNA). This chain is S-adenosylmethionine:tRNA ribosyltransferase-isomerase, found in Brucella melitensis biotype 2 (strain ATCC 23457).